Here is a 196-residue protein sequence, read N- to C-terminus: MADS-box transcription factor 32 (196 aa).

An MADS-box domain is found at 1–61; sequence MGRGRSEIKR…GKLYHFLSPT (61 aa). In terms of domain architecture, K-box spans 85 to 175; that stretch reads RQERRAELEK…CDKIAHAQTL (91 aa).

The protein localises to the nucleus. Probable transcription factor. The sequence is that of MADS-box transcription factor 32 (MADS32) from Oryza sativa subsp. japonica (Rice).